We begin with the raw amino-acid sequence, 572 residues long: Potassium-transporting ATPase potassium-binding subunit (572 aa).

A run of 10 helical transmembrane segments spans residues 6–26 (ILFV…GTYI), 66–86 (FFSL…VLLL), 135–155 (ALAV…IVLI), 177–197 (IFWI…FQGV), 251–271 (TIIT…ALTY), 283–303 (GWMI…VMTI), 382–402 (IFGG…LAVF), 428–448 (MFAL…AAVI), 493–513 (ITIA…VMML), and 537–557 (FIFS…TIFP).

Belongs to the KdpA family. As to quaternary structure, the system is composed of three essential subunits: KdpA, KdpB and KdpC.

Its subcellular location is the cell inner membrane. Its function is as follows. Part of the high-affinity ATP-driven potassium transport (or Kdp) system, which catalyzes the hydrolysis of ATP coupled with the electrogenic transport of potassium into the cytoplasm. This subunit binds the periplasmic potassium ions and delivers the ions to the membrane domain of KdpB through an intramembrane tunnel. The polypeptide is Potassium-transporting ATPase potassium-binding subunit (Francisella philomiragia subsp. philomiragia (strain ATCC 25017 / CCUG 19701 / FSC 153 / O#319-036)).